Reading from the N-terminus, the 279-residue chain is HTH-type transcriptional regulator HdfR (279 aa).

The HTH lysR-type domain occupies 1 to 58; it reads MDTELLKTFLEVSRTRHFGRAAESLYLTQSAVSFRIRQLENQLGVNLFTRHRNNIRLT. The H-T-H motif DNA-binding region spans 18–37; sequence FGRAAESLYLTQSAVSFRIR.

It belongs to the LysR transcriptional regulatory family.

Functionally, negatively regulates the transcription of the flagellar master operon flhDC by binding to the upstream region of the operon. The polypeptide is HTH-type transcriptional regulator HdfR (Escherichia coli (strain ATCC 8739 / DSM 1576 / NBRC 3972 / NCIMB 8545 / WDCM 00012 / Crooks)).